Consider the following 310-residue polypeptide: MKFERGLEKLNIEFLKDKPLKDFTTFKIGGKARYIVFPKNIDELIEIIKLVKESGINWRIVGNCSNVLVSDKGFDGAIITTTKMDFFKTEENLIEAECGCMISQVARKACENGLKGLEFAVGIPGTVGGAVYMNAGAYDSEIKDVFECAEVLDEDLNIFKLGKSDMRFSYRHSRLKEEKLILLKATFRLQYAREEDVPPIEKANEYNQRRREKQPLQYPSAGSIFKRPPGNFAGKLIEDAGLKGYRVGNACISGKHAGFIVNLGDALAEDVRKLIYHTQKSVYEKFGVLLEPEIEFIGEFETPLFEMSTK.

An FAD-binding PCMH-type domain is found at 27–192 (KIGGKARYIV…LKATFRLQYA (166 aa)). Residue R171 is part of the active site. S223 acts as the Proton donor in catalysis. E293 is an active-site residue.

The protein belongs to the MurB family. It depends on FAD as a cofactor.

The protein resides in the cytoplasm. The enzyme catalyses UDP-N-acetyl-alpha-D-muramate + NADP(+) = UDP-N-acetyl-3-O-(1-carboxyvinyl)-alpha-D-glucosamine + NADPH + H(+). Its pathway is cell wall biogenesis; peptidoglycan biosynthesis. In terms of biological role, cell wall formation. This is UDP-N-acetylenolpyruvoylglucosamine reductase from Caldicellulosiruptor saccharolyticus (strain ATCC 43494 / DSM 8903 / Tp8T 6331).